Consider the following 115-residue polypeptide: U3-lycotoxin-Ls1l (115 aa).

A signal peptide spans 1–20; sequence MKFVLLFGVLLVTLFSYSSA. A propeptide spanning residues 21-44 is cleaved from the precursor; it reads EMLDDFDQADEDELLSLIEKEEAR. Disulfide bonds link C55–C72, C62–C87, and C74–C85.

Belongs to the neurotoxin 19 (CSTX) family. 01 subfamily. As to expression, expressed by the venom gland.

It localises to the secreted. This Lycosa singoriensis (Wolf spider) protein is U3-lycotoxin-Ls1l.